A 288-amino-acid chain; its full sequence is Eukaryotic translation initiation factor 3 subunit G (288 aa).

2 disordered regions span residues Met1–Gly33 and Asp156–Arg197. One can recognise an RRM domain in the interval Ala208–Arg286.

The protein belongs to the eIF-3 subunit G family. As to quaternary structure, component of the eukaryotic translation initiation factor 3 (eIF-3) complex.

Its subcellular location is the cytoplasm. In terms of biological role, RNA-binding component of the eukaryotic translation initiation factor 3 (eIF-3) complex, which is involved in protein synthesis of a specialized repertoire of mRNAs and, together with other initiation factors, stimulates binding of mRNA and methionyl-tRNAi to the 40S ribosome. The eIF-3 complex specifically targets and initiates translation of a subset of mRNAs involved in cell proliferation. This subunit can bind 18S rRNA. The polypeptide is Eukaryotic translation initiation factor 3 subunit G (tif35) (Aspergillus niger (strain ATCC MYA-4892 / CBS 513.88 / FGSC A1513)).